The following is a 90-amino-acid chain: MISTIYRERTAADLKSRIDHVLLNGQKTEIVELAIDGATVTVLTKREEDIKHIETVQIFDELGNVITERKTDLDVSENRTLDFRFTFEVV.

This is an uncharacterized protein from Bacillus subtilis (strain 168).